An 893-amino-acid chain; its full sequence is DNA mismatch repair protein MutS (893 aa).

Residue 637-644 (GPNMGGKS) participates in ATP binding.

It belongs to the DNA mismatch repair MutS family.

In terms of biological role, this protein is involved in the repair of mismatches in DNA. It is possible that it carries out the mismatch recognition step. This protein has a weak ATPase activity. This chain is DNA mismatch repair protein MutS, found in Burkholderia thailandensis (strain ATCC 700388 / DSM 13276 / CCUG 48851 / CIP 106301 / E264).